Consider the following 624-residue polypeptide: Aeromonas extracellular serine protease (624 aa).

The first 24 residues, 1–24, serve as a signal peptide directing secretion; sequence MKQTSLALAITALLSTLPSALVQA. Residues C28 and C48 are joined by a disulfide bond. N53 contributes to the Ca(2+) binding site. The region spanning 59–421 is the Peptidase S8 domain; it reads QWYLLNSGQD…GKVRDVKGLE (363 aa). The Charge relay system role is filled by D102. D111 serves as a coordination point for Ca(2+). Residues 116-140 are disordered; that stretch reads VRPGSKNVVTGSDDPTPTDPDTAHG. The Charge relay system role is filled by H139. Ca(2+)-binding residues include V150, N152, I154, T156, D321, L322, G324, M327, N330, and C350. C325 and C350 form a disulfide bridge. S360 serves as the catalytic Charge relay system. The P/Homo B domain occupies 456-622; the sequence is LPPLVQLPWQ…SLRVLGHDAN (167 aa). Positions 478, 512, 577, 579, 602, and 603 each coordinate Ca(2+).

This sequence belongs to the peptidase S8 family. Furin subfamily. As to quaternary structure, forms a complex with the chaperone ORF2 in the periplasm. After translocation of the ASP-ORF2 complex from the periplasm to the extracellular space, the complex is dissociated in a pH-dependent manner. Ca(2+) serves as cofactor.

The protein resides in the periplasm. Its subcellular location is the secreted. The catalysed reaction is Cleavage of -Lys-Lys-|-Xaa and -Lys-Arg-|-Xaa bonds.. Its activity is regulated as follows. Folding, maturation and production of the active form of the protease by the cell requires a protein (ORF2), encoded just downstream of asp, which acts as a chaperone. Formation of a complex with ORF2 in the periplasm also inactivates the protease activity and likely protects ASP from intrinsic proteases. In vitro, protease activity is inhibited by human alpha-2-macroglobulin, suggesting that this inhibitor can impede ASP virulence activities in A.sobria infection sites. However, slow ASP inhibition by alpha-2-macroglobulin in plasma may indicate insufficient ASP control in vivo. Activity is inhibited by serine protease inhibitors such as 4-(2-aminoethyl)-benzenesulfonyl fluoride (AEBSF) and diisopropyl fluorophosphate (DFP). Not inhibited by metallo-protease inhibitors and cysteine protease inhibitors. The treatment with reagents to modify sulfhydryl group do not reduce the activity. Functionally, exhibits serine protease activity. Preferentially cleaves the peptide bond following two basic residues, one of which is Lys, but does not recognize the bond following a single basic residue. Probable potent virulence factor that cleaves various host plasma proteins, including prekallikrein, prothrombin and fibrinogen. ASP induces vascular leakage and reduction in blood pressure by activating the host plasma kallikrein/kinin system. It affects the host coagulation system during infection through activation of prothrombin to alpha-thrombin and degradation of fibrinogen, which impairs plasma clottability. It also hydrolyzes the complement component C5, releasing the C5a anaphylatoxin, which causes the formation of pus and edema. In addition, degrades its external chaperone ORF2 after the secretion of the ASP-ORF2 complex. The chain is Aeromonas extracellular serine protease from Aeromonas sobria.